A 333-amino-acid polypeptide reads, in one-letter code: GDP-fucose transporter 1 (333 aa).

The next 8 membrane-spanning stretches (helical) occupy residues 13 to 33 (SIKI…MVFL), 45 to 65 (APMF…FILG), 95 to 115 (LVFV…GVAF), 139 to 159 (TSMP…VGVN), 169 to 189 (MAGI…AIYI), 211 to 231 (AIFL…IAAS), 239 to 259 (YWFL…VSML), and 293 to 313 (TATW…YVLV).

Belongs to the TPT transporter family. SLC35C subfamily.

The protein localises to the golgi apparatus membrane. It carries out the reaction GMP(out) + GDP-beta-L-fucose(in) = GMP(in) + GDP-beta-L-fucose(out). Its function is as follows. Antiporter specific for GDP-l-fucose and depending on the concomitant reverse transport of GMP. Involved in GDP-fucose import from the cytoplasm into the Golgi lumen. This is GDP-fucose transporter 1 (slc35c1) from Monosiga brevicollis (Choanoflagellate).